Consider the following 477-residue polypeptide: C4-dicarboxylate transport protein 1 (477 aa).

The next 8 membrane-spanning stretches (helical) occupy residues 21–39, 59–76, 89–111, 162–179, 200–221, 231–253, 342–364, and 368–387; these read PYVQVLVAILLGVAVGHFY, MIIAPVIFLTVSTGIAGM, AMVYFVTFSTLALIVGLIVGNVI, ILQVLFFSVLFGIALAMV, LVGILMKAAPIGAFGAMAFTIG, LAMLVGTFYLTAFLFVFGVLGAV, VLLLLVAMLSSKGAAGVTGAGFV, and ATLSVVPAVPVAGMALILGV. A disordered region spans residues 435–477; that stretch reads SAGQPLITPAPSNSAASLPVESPGWSQTPDDRAAGSKQTLAGR.

It belongs to the dicarboxylate/amino acid:cation symporter (DAACS) (TC 2.A.23) family.

The protein resides in the cell inner membrane. Responsible for the transport of dicarboxylates such as succinate, fumarate, and malate from the periplasm across the membrane. This transport system plays an important role in the energy supply of rhizobium-legume symbionts. The sequence is that of C4-dicarboxylate transport protein 1 (dctA1) from Mesorhizobium japonicum (strain LMG 29417 / CECT 9101 / MAFF 303099) (Mesorhizobium loti (strain MAFF 303099)).